Reading from the N-terminus, the 462-residue chain is tRNA wybutosine-synthesizing protein 2 (462 aa).

S-adenosyl-L-methionine-binding positions include serine 257, lysine 264, and 305-306 (EL).

This sequence belongs to the class I-like SAM-binding methyltransferase superfamily. TRM5/TYW2 family.

Its subcellular location is the cytoplasm. It carries out the reaction 4-demethylwyosine(37) in tRNA(Phe) + S-adenosyl-L-methionine = 4-demethyl-7-[(3S)-3-amino-3-carboxypropyl]wyosine(37) in tRNA(Phe) + S-methyl-5'-thioadenosine + H(+). It functions in the pathway tRNA modification; wybutosine-tRNA(Phe) biosynthesis. Its function is as follows. S-adenosyl-L-methionine-dependent transferase that acts as a component of the wybutosine biosynthesis pathway. Wybutosine is a hyper modified guanosine with a tricyclic base found at the 3'-position adjacent to the anticodon of eukaryotic phenylalanine tRNA. Catalyzes the transfer of the alpha-amino-alpha-carboxypropyl (acp) group from S-adenosyl-L-methionine to the C-7 position of 4-demethylwyosine (imG-14) to produce wybutosine-86. This Saccharomyces cerevisiae (strain ATCC 204508 / S288c) (Baker's yeast) protein is tRNA wybutosine-synthesizing protein 2 (TRM12).